The chain runs to 107 residues: YcgL domain-containing protein Psyc_0800 (107 aa).

The region spanning 1–95 (MHCDIYKFLK…QDVMRRQAEL (95 aa)) is the YcgL domain.

This is YcgL domain-containing protein Psyc_0800 from Psychrobacter arcticus (strain DSM 17307 / VKM B-2377 / 273-4).